Here is a 110-residue protein sequence, read N- to C-terminus: Nucleoid-associated protein NFA_2940 (110 aa).

It belongs to the YbaB/EbfC family. Homodimer.

Its subcellular location is the cytoplasm. The protein localises to the nucleoid. In terms of biological role, binds to DNA and alters its conformation. May be involved in regulation of gene expression, nucleoid organization and DNA protection. This chain is Nucleoid-associated protein NFA_2940, found in Nocardia farcinica (strain IFM 10152).